The primary structure comprises 365 residues: MKAIAVEPGAGTPTLIDLPVPEPAPGEALVRTLRVGVDGTDDEVIAGAHGGVPDGDDRLVLGHEAVGVVEDANGTDLEEGQYVVPTVRRPPPGVETNVYFERGEPDMAPEGEYVERGIVGAHGFMAEYFTSPADCLVPISADLAPVGFLVEPISITEKAIEHAAATRSAFDWRPESVFVLGNGSLGLLTAAMFRTTMGYDRVYCLGRRDRPHPSIDILDELGVTYIDSRETPVPEVPEVYEPMDLVYEATGYAKHAFESIEALAPNGVAALLGVPNDWSFEVDGGRLHREMVLHNKAIVGSVNSNRDQFASAVDTLAGLPSWVIEDVVSGVYGLEEYERAFSDPTDDATADDDTTIKTAVEFSNI.

Aspartate 38 serves as a coordination point for Zn(2+). Residue threonine 40 coordinates substrate. Histidine 63 and glutamate 64 together coordinate Zn(2+). Positions 115 and 151 each coordinate substrate. Glutamate 151 is a binding site for Zn(2+). NADP(+) contacts are provided by residues 182 to 185 (NGSL), 207 to 208 (RR), 272 to 274 (LGV), and 301 to 303 (SVN). Asparagine 303 lines the substrate pocket.

Belongs to the zinc-containing alcohol dehydrogenase family. Glucose 1-dehydrogenase subfamily. Requires Zn(2+) as cofactor.

The enzyme catalyses D-glucose + NAD(+) = D-glucono-1,5-lactone + NADH + H(+). It carries out the reaction D-glucose + NADP(+) = D-glucono-1,5-lactone + NADPH + H(+). In terms of biological role, catalyzes the NAD(P)(+)-dependent oxidation of D-glucose to D-gluconate via gluconolactone. Can utilize both NAD(+) and NADP(+) as electron acceptor. Is involved in the degradation of glucose through a modified Entner-Doudoroff pathway. This Haloterrigena turkmenica (strain ATCC 51198 / DSM 5511 / JCM 9101 / NCIMB 13204 / VKM B-1734 / 4k) (Halococcus turkmenicus) protein is Glucose 1-dehydrogenase 1.